Consider the following 307-residue polypeptide: Mitochondrial brown fat uncoupling protein 1 (307 aa).

At 1–10 (MVSLTTSEVH) the chain is on the mitochondrial intermembrane side. Residues 11-32 (PTMGVKTFSAGISACLADIITF) traverse the membrane as a helical segment. Solcar repeat units lie at residues 11-102 (PTMG…VQEY), 111-201 (PTLG…MKGA), and 210-295 (DDVP…LKKE). The Mitochondrial matrix segment spans residues 33-73 (PLDTAKVRLQIQGEGQTSSTIRYKGVLGTITTLAKTEGWPK). Lys56 is a fatty acid 16:0 binding site. Residues 74 to 96 (LYSGLPAGIQRQISFASLRIGLY) form a helical membrane-spanning segment. The Mitochondrial intermembrane portion of the chain corresponds to 97-116 (DTVQEYFSSGKETPPTLGNR). The chain crosses the membrane as a helical span at residues 117–133 (ISAGLMTGGVAVFIGQP). Residues 134–178 (TEVVKVRLQAQSHLHGIKPRYTGTYNAYRIIATTESFSTLWKGTT) are Mitochondrial matrix-facing. The chain crosses the membrane as a helical span at residues 179-195 (PNLMRNVIINRTELVTY). Residues 196–212 (DLMKGALVNNQILADDV) lie on the Mitochondrial intermembrane side of the membrane. The chain crosses the membrane as a helical span at residues 213–232 (PCHLLSALVAGFCTTFLASP). Residues 233–266 (ADVVKTRFINSLPGQYPSVPSCAMTMLTKEGPTA) lie on the Mitochondrial matrix side of the membrane. Cys254 bears the Cysteine sulfenic acid (-SOH) mark. Residues 267–289 (FFKGFVPSFLRLASWNVIMFVCF) traverse the membrane as a helical segment. Lys269 serves as a coordination point for fatty acid 16:0. The Mitochondrial intermembrane segment spans residues 290 to 307 (EQLKKELMKSRQTMDCTT).

Belongs to the mitochondrial carrier (TC 2.A.29) family. As to quaternary structure, most probably functions as a monomer. Binds one purine nucleotide per monomer. However, has also been suggested to function as a homodimer or a homotetramer. Tightly associates with cardiolipin in the mitochondrion inner membrane; may stabilize and regulate its activity. In terms of processing, may undergo sulfenylation upon cold exposure. May increase the sensitivity of UCP1 thermogenic function to the activation by noradrenaline probably through structural effects. Post-translationally, may undergo ubiquitin-mediated proteasomal degradation.

The protein localises to the mitochondrion inner membrane. The catalysed reaction is H(+)(in) = H(+)(out). With respect to regulation, has no constitutive proton transporter activity and has to be activated by long-chain fatty acids/LCFAs. Inhibited by purine nucleotides. Both purine nucleotides and LCFAs bind the cytosolic side of the transporter and directly compete to activate or inhibit it. Activated by noradrenaline and reactive oxygen species. Despite lacking canonical translational encoding for selenocysteine, a small pool of the protein has been observed to selectively incorporate selenocysteine at 'Cys-254'. Selenocysteine-modified protein is highly sensitive to redox modification and may constitute a pool of protein highly sensitive to activation by elevated levels of reactive oxygen species (ROS). In terms of biological role, mitochondrial protein responsible for thermogenic respiration, a specialized capacity of brown adipose tissue and beige fat that participates in non-shivering adaptive thermogenesis to temperature and diet variations and more generally to the regulation of energy balance. Functions as a long-chain fatty acid/LCFA and proton symporter, simultaneously transporting one LCFA and one proton through the inner mitochondrial membrane. However, LCFAs remaining associated with the transporter via their hydrophobic tails, it results in an apparent transport of protons activated by LCFAs. Thereby, dissipates the mitochondrial proton gradient and converts the energy of substrate oxydation into heat instead of ATP. Regulates the production of reactive oxygen species/ROS by mitochondria. The chain is Mitochondrial brown fat uncoupling protein 1 from Dicrostonyx groenlandicus (Northern collared lemming).